A 1227-amino-acid chain; its full sequence is DNA-directed RNA polymerase subunit beta' (1227 aa).

Residues C60, C62, C75, and C78 each coordinate Zn(2+). Mg(2+) is bound by residues D449, D451, and D453. C847, C921, C928, and C931 together coordinate Zn(2+).

It belongs to the RNA polymerase beta' chain family. As to quaternary structure, the RNAP catalytic core consists of 2 alpha, 1 beta, 1 beta' and 1 omega subunit. When a sigma factor is associated with the core the holoenzyme is formed, which can initiate transcription. Mg(2+) is required as a cofactor. Zn(2+) serves as cofactor.

The enzyme catalyses RNA(n) + a ribonucleoside 5'-triphosphate = RNA(n+1) + diphosphate. DNA-dependent RNA polymerase catalyzes the transcription of DNA into RNA using the four ribonucleoside triphosphates as substrates. This Lysinibacillus sphaericus (strain C3-41) protein is DNA-directed RNA polymerase subunit beta'.